The chain runs to 190 residues: Ribose 1,5-bisphosphate phosphokinase PhnN (190 aa).

Residue 10 to 17 (GPSGSGKD) coordinates ATP.

It belongs to the ribose 1,5-bisphosphokinase family.

It carries out the reaction alpha-D-ribose 1,5-bisphosphate + ATP = 5-phospho-alpha-D-ribose 1-diphosphate + ADP. Its pathway is metabolic intermediate biosynthesis; 5-phospho-alpha-D-ribose 1-diphosphate biosynthesis; 5-phospho-alpha-D-ribose 1-diphosphate from D-ribose 5-phosphate (route II): step 3/3. In terms of biological role, catalyzes the phosphorylation of ribose 1,5-bisphosphate to 5-phospho-D-ribosyl alpha-1-diphosphate (PRPP). This chain is Ribose 1,5-bisphosphate phosphokinase PhnN, found in Pseudomonas fluorescens (strain SBW25).